A 333-amino-acid polypeptide reads, in one-letter code: Nucleoid-associated protein APJL_0454 (333 aa).

This sequence belongs to the YejK family.

It is found in the cytoplasm. The protein resides in the nucleoid. The polypeptide is Nucleoid-associated protein APJL_0454 (Actinobacillus pleuropneumoniae serotype 3 (strain JL03)).